The chain runs to 204 residues: Nicotine blue oxidoreductase (204 aa).

Homotetramer. FMN is required as a cofactor.

The enzyme catalyses 3,3'-bipyridine-2,2',5,5',6,6'-hexol + NADP(+) = (E)-2,2',5,5'-tetrahydroxy-6H,6'H-(3,3'-bipyridinylidene)-6,6'-dione + NADPH + 3 H(+). It carries out the reaction 3,3'-bipyridine-2,2',5,5',6,6'-hexol + NAD(+) = (E)-2,2',5,5'-tetrahydroxy-6H,6'H-(3,3'-bipyridinylidene)-6,6'-dione + NADH + 3 H(+). Its pathway is alkaloid degradation; nicotine degradation. Its function is as follows. Catalyzes the reduction of nicotine blue to its hydroquinone form. Nicotine blue is the name given to the compound formed by the autocatalytic condensation of two molecules of 2,3,6-trihydroxypyridine, an intermediate in the nicotine degradation pathway. May play a role in preventing the intracellular formation of nicotine blue semiquinone radicals, which by redox cycling would lead to the formation of toxic reactive oxygen species. Besides nicotine blue, several other quinones are reduced by nboR. The chain is Nicotine blue oxidoreductase (nboR) from Paenarthrobacter nicotinovorans (Arthrobacter nicotinovorans).